Consider the following 247-residue polypeptide: Complement C1q subcomponent subunit B (247 aa).

The N-terminal stretch at 1-22 (MKTPRGSVLVLLLLNLLRVSWA) is a signal peptide. Gln23 is modified (pyrrolidone carboxylic acid). 5 positions are modified to 4-hydroxyproline: Pro29, Pro32, Pro35, Pro47, and Pro50. Residues 30-78 (SIPGIPGIPGKPGSDGKPGTPGTKGEKGLPGLVSHLNENGEKGDPGFPG) form a disordered region. Residues 39-98 (GKPGSDGKPGTPGTKGEKGLPGLVSHLNENGEKGDPGFPGMPGKVGPKGPIGPKGVPGPP) enclose the Collagen-like domain. Low complexity predominate over residues 40–52 (KPGSDGKPGTPGT). 2 positions are modified to 5-hydroxylysine: Lys53 and Lys56. Pro59 carries the 4-hydroxyproline modification. Lys71 bears the 5-hydroxylysine mark. 4-hydroxyproline is present on residues Pro77 and Pro80. A 5-hydroxylysine mark is found at Lys86 and Lys92. A 4-hydroxyproline mark is found at Pro95 and Pro98. 5-hydroxylysine is present on Lys104. The 137-residue stretch at 111 to 247 (KATQKIAFSA…GFMLFPDTEA (137 aa)) folds into the C1q domain. Cys175 and Cys192 are joined by a disulfide. Ca(2+) contacts are provided by Asp193, Tyr194, and Gln200.

In terms of assembly, core component of the complement C1 complex, a calcium-dependent complex composed of 1 molecule of the C1Q subcomplex, 2 molecules of C1R and 2 molecules of C1S. The C1Q subcomplex is composed 18 subunits: 3 chains of C1QA, C1QB, and C1QC trimerize to form 6 collagen-like triple helices connected to six globular ligand-recognition modules (C1q domain). In terms of processing, hydroxylated on lysine and proline residues. Hydroxylated lysine residues can be glycosylated. Bovine C1Q contains up to 66.3 hydroxylysine-galactosylglucose residues. Total percentage hydroxylysine residues glycosylated is 92.0%. Contains no hydroxylysine-monosaccharides.

Its subcellular location is the secreted. It is found in the cell surface. With respect to regulation, the C1Q subcomplex is inhibited by sulfated molecules, such as triterpenoid sulfates, heparan sulfate, or chondroitin sulfates. In terms of biological role, core component of the complement C1 complex, a multiprotein complex that initiates the classical pathway of the complement system, a cascade of proteins that leads to phagocytosis and breakdown of pathogens and signaling that strengthens the adaptive immune system. The classical complement pathway is initiated by the C1Q subcomplex of the C1 complex, which specifically binds IgG or IgM immunoglobulins complexed with antigens, forming antigen-antibody complexes on the surface of pathogens: C1QA, together with C1QB and C1QC, specifically recognizes and binds the Fc regions of IgG or IgM via its C1q domain. Immunoglobulin-binding activates the proenzyme C1R, which cleaves C1S, initiating the proteolytic cascade of the complement system. The C1Q subcomplex is activated by a hexamer of IgG complexed with antigens, while it is activated by a pentameric IgM. The C1Q subcomplex also recognizes and binds phosphatidylserine exposed on the surface of cells undergoing programmed cell death, possibly promoting activation of the complement system. The sequence is that of Complement C1q subcomponent subunit B (C1QB) from Bos taurus (Bovine).